A 330-amino-acid chain; its full sequence is Inactive hydroxysteroid dehydrogenase-like protein 1 (330 aa).

An N-acetylalanine modification is found at A2. Positions 2–82 (AAVDSFYLLY…SGATDGIGRA (81 aa)) are required for mitochondria translocation. NADP(+) contacts are provided by residues 74–80 (GATDGIG), D125, and K222.

Belongs to the short-chain dehydrogenases/reductases (SDR) family. 17-beta-HSD 3 subfamily. As to quaternary structure, interacts with STYXL1.

It localises to the mitochondrion. This chain is Inactive hydroxysteroid dehydrogenase-like protein 1 (HSDL1), found in Pongo abelii (Sumatran orangutan).